The primary structure comprises 338 residues: Anthranilate phosphoribosyltransferase (338 aa).

5-phospho-alpha-D-ribose 1-diphosphate-binding positions include Gly78, 81 to 82 (GD), Ser86, 88 to 91 (NIST), 106 to 114 (KHGNKSITS), and Ser118. Gly78 contacts anthranilate. A Mg(2+)-binding site is contributed by Ser90. Asn109 lines the anthranilate pocket. Arg163 is a binding site for anthranilate. Positions 222 and 223 each coordinate Mg(2+).

It belongs to the anthranilate phosphoribosyltransferase family. In terms of assembly, homodimer. Requires Mg(2+) as cofactor.

It carries out the reaction N-(5-phospho-beta-D-ribosyl)anthranilate + diphosphate = 5-phospho-alpha-D-ribose 1-diphosphate + anthranilate. It functions in the pathway amino-acid biosynthesis; L-tryptophan biosynthesis; L-tryptophan from chorismate: step 2/5. In terms of biological role, catalyzes the transfer of the phosphoribosyl group of 5-phosphorylribose-1-pyrophosphate (PRPP) to anthranilate to yield N-(5'-phosphoribosyl)-anthranilate (PRA). The sequence is that of Anthranilate phosphoribosyltransferase from Staphylococcus carnosus (strain TM300).